The primary structure comprises 446 residues: Argininosuccinate synthase (446 aa).

ATP contacts are provided by residues 17–25 (AFSGGLDTS) and alanine 43. Position 99 (tyrosine 99) interacts with L-citrulline. ATP-binding residues include glycine 129 and threonine 131. L-aspartate is bound by residues threonine 131, asparagine 135, and aspartate 136. Asparagine 135 serves as a coordination point for L-citrulline. Aspartate 136 provides a ligand contact to ATP. 2 residues coordinate L-citrulline: arginine 139 and serine 192. Aspartate 194 lines the ATP pocket. L-citrulline contacts are provided by threonine 201, glutamate 203, and glutamate 280.

The protein belongs to the argininosuccinate synthase family. Type 2 subfamily. Homotetramer.

It is found in the cytoplasm. The enzyme catalyses L-citrulline + L-aspartate + ATP = 2-(N(omega)-L-arginino)succinate + AMP + diphosphate + H(+). The protein operates within amino-acid biosynthesis; L-arginine biosynthesis; L-arginine from L-ornithine and carbamoyl phosphate: step 2/3. This Methylibium petroleiphilum (strain ATCC BAA-1232 / LMG 22953 / PM1) protein is Argininosuccinate synthase.